Consider the following 286-residue polypeptide: Flagellar filament 31.3 kDa core protein (286 aa).

It belongs to the bacterial flagellin family. In terms of assembly, the core of the flagellum consists of several antigenically related polypeptides. Post-translationally, glycosylated. Glycosylation is not essential for motility.

The protein localises to the periplasmic flagellum. The protein resides in the periplasm. In terms of biological role, component of the core of the flagella. The polypeptide is Flagellar filament 31.3 kDa core protein (flaB2) (Treponema maltophilum).